The primary structure comprises 504 residues: ATP synthase subunit alpha, chloroplastic (504 aa).

170–177 serves as a coordination point for ATP; it reads GDRQTGKT.

Belongs to the ATPase alpha/beta chains family. F-type ATPases have 2 components, CF(1) - the catalytic core - and CF(0) - the membrane proton channel. CF(1) has five subunits: alpha(3), beta(3), gamma(1), delta(1), epsilon(1). CF(0) has four main subunits: a, b, b' and c.

The protein resides in the plastid. It is found in the chloroplast thylakoid membrane. It carries out the reaction ATP + H2O + 4 H(+)(in) = ADP + phosphate + 5 H(+)(out). Produces ATP from ADP in the presence of a proton gradient across the membrane. The alpha chain is a regulatory subunit. The polypeptide is ATP synthase subunit alpha, chloroplastic (Pyropia yezoensis (Susabi-nori)).